The chain runs to 336 residues: Tetraacyldisaccharide 4'-kinase (336 aa).

Residue 60–67 (TAGGNGKT) coordinates ATP.

It belongs to the LpxK family.

The catalysed reaction is a lipid A disaccharide + ATP = a lipid IVA + ADP + H(+). The protein operates within glycolipid biosynthesis; lipid IV(A) biosynthesis; lipid IV(A) from (3R)-3-hydroxytetradecanoyl-[acyl-carrier-protein] and UDP-N-acetyl-alpha-D-glucosamine: step 6/6. Transfers the gamma-phosphate of ATP to the 4'-position of a tetraacyldisaccharide 1-phosphate intermediate (termed DS-1-P) to form tetraacyldisaccharide 1,4'-bis-phosphate (lipid IVA). The polypeptide is Tetraacyldisaccharide 4'-kinase (Vibrio cholerae serotype O1 (strain ATCC 39315 / El Tor Inaba N16961)).